Consider the following 328-residue polypeptide: Adenosine receptor A1 (328 aa).

Topologically, residues 1–10 are extracellular; it reads MPPSISAFQA. Residues 11 to 33 traverse the membrane as a helical segment; the sequence is AYIGIEVLIALVSVPGNVLVIWA. Over 34–46 the chain is Cytoplasmic; the sequence is VKVNQALRDATFC. Residues 47–69 traverse the membrane as a helical segment; that stretch reads FIVSLAVADVAVGALVIPLAILI. The Extracellular segment spans residues 70–80; the sequence is NIGPETYFHTC. Cysteine 80 and cysteine 169 are joined by a disulfide. The chain crosses the membrane as a helical span at residues 81–102; that stretch reads LMVACPVLILTQSSILALLAIA. Over 103–123 the chain is Cytoplasmic; sequence VDRYLRVKIPLRYKAVVTPRR. A helical membrane pass occupies residues 124–146; that stretch reads AAVAIAGCWILSLVVGLTPMFGW. Residues 147–176 lie on the Extracellular side of the membrane; the sequence is NNLREVQRAWAANGSVGEPVIKCEFEKVIS. Asparagine 159 carries N-linked (GlcNAc...) asparagine glycosylation. Residues 177 to 201 form a helical membrane-spanning segment; it reads MEYMVYFNFFVWVLPPLLLMVLIYL. Over 202–235 the chain is Cytoplasmic; sequence EVFYLIRRQLSKKASASSGDPHKYYGKELKIAKS. The chain crosses the membrane as a helical span at residues 236–259; it reads LALILFLFALSWLPLHILNCVTLF. Topologically, residues 260-267 are extracellular; the sequence is CPSCQKPS. Residues 268-292 traverse the membrane as a helical segment; sequence ILVYTAIFLTHGNSAMNPIVYAFRI. Residues 293-328 lie on the Cytoplasmic side of the membrane; sequence HKFRVTFLKIWNDHFRCRPAPAGDGDEDLPEEKPND. A lipid anchor (S-palmitoyl cysteine) is attached at cysteine 309.

It belongs to the G-protein coupled receptor 1 family.

Its subcellular location is the cell membrane. Its function is as follows. Receptor for adenosine. The activity of this receptor is mediated by G proteins which inhibit adenylyl cyclase. This is Adenosine receptor A1 (ADORA1) from Oryctolagus cuniculus (Rabbit).